Here is a 629-residue protein sequence, read N- to C-terminus: tRNA uridine 5-carboxymethylaminomethyl modification enzyme MnmG (629 aa).

Residues 13 to 18, Val125, and Ser180 contribute to the FAD site; that span reads GGGHAG. Residue 273–287 coordinates NAD(+); the sequence is GPRYCPSIEDKVMRF. Gln370 serves as a coordination point for FAD.

This sequence belongs to the MnmG family. Homodimer. Heterotetramer of two MnmE and two MnmG subunits. The cofactor is FAD.

The protein resides in the cytoplasm. Functionally, NAD-binding protein involved in the addition of a carboxymethylaminomethyl (cmnm) group at the wobble position (U34) of certain tRNAs, forming tRNA-cmnm(5)s(2)U34. The chain is tRNA uridine 5-carboxymethylaminomethyl modification enzyme MnmG from Salmonella schwarzengrund (strain CVM19633).